Consider the following 208-residue polypeptide: OVARIAN TUMOR DOMAIN-containing deubiquitinating enzyme 2 (208 aa).

The 123-residue stretch at 5 to 127 (IVRRVIPSDN…GLHYDALALS (123 aa)) folds into the OTU domain. The active site involves Asp13. Cys16 serves as the catalytic Nucleophile. Catalysis depends on residues His120 and His201.

This sequence belongs to the peptidase C85 family.

The catalysed reaction is Thiol-dependent hydrolysis of ester, thioester, amide, peptide and isopeptide bonds formed by the C-terminal Gly of ubiquitin (a 76-residue protein attached to proteins as an intracellular targeting signal).. Functionally, hydrolase that can remove conjugated ubiquitin from proteins in vitro and may therefore play an important regulatory role at the level of protein turnover by preventing degradation. Cysteine protease with a preference for 'Lys-63' and 'Lys-48' -linked ubiquitin (UB) tetramers as substrates. This chain is OVARIAN TUMOR DOMAIN-containing deubiquitinating enzyme 2, found in Arabidopsis thaliana (Mouse-ear cress).